The following is a 436-amino-acid chain: MENIKLACSLETNQTYIIAVSGGVDSMALLHYLVAQKIKLQVVHFNHLTNSNTWKNKELVKNYCLQNSLGFHYFELNCPQKNFQAQARLLRQQKLMQIAAKHRTPFILTAHHLDDLAETILQKISRSSTLLGYSGMQIQTSWTDFIFLKPFLYIPKAKIISYAAFYKIPFLEDYTNQKLTYQRNQIRHQVIPYLKTQTSFLQNIQKYQQTLLQAYNFIRKQTLLFLTKHTNHSCNQPNSIALAPFLNLDLVIQKDIILLLLEQKNITQSFIFIQNIIKGINNPYKPNLSWHLNSDWHLIKDYKHIKLMNPALPLPFALTKPLLCVSTCNLCLVCVCPLIETLNYNSQKVSFPLKVRLRQPKDTLKFSFGTKKLKKFLIEKKVPLTQRNNLWLVVDNLDNILFIPQLYTNLTLGNQFRIYLAFKNFFTSSNCFSQTN.

Residue 21–26 participates in ATP binding; that stretch reads SGGVDS.

The protein belongs to the tRNA(Ile)-lysidine synthase family.

The protein resides in the cytoplasm. It carries out the reaction cytidine(34) in tRNA(Ile2) + L-lysine + ATP = lysidine(34) in tRNA(Ile2) + AMP + diphosphate + H(+). Its function is as follows. Ligates lysine onto the cytidine present at position 34 of the AUA codon-specific tRNA(Ile) that contains the anticodon CAU, in an ATP-dependent manner. Cytidine is converted to lysidine, thus changing the amino acid specificity of the tRNA from methionine to isoleucine. The sequence is that of tRNA(Ile)-lysidine synthase from Aster yellows witches'-broom phytoplasma (strain AYWB).